The following is a 359-amino-acid chain: Phospho-N-acetylmuramoyl-pentapeptide-transferase (359 aa).

Helical transmembrane passes span 3–23 (QILI…PALI), 55–75 (VAII…GLAF), 80–100 (ISAS…VGFL), 117–137 (TAKT…ALGF), 156–176 (IATV…VVSA), 187–207 (LDGL…LITF), 231–251 (LAIV…WNAA), 255–275 (IFMG…ISVT), 280–300 (ILAV…VLQI), and 334–354 (FWLL…GEWL).

The protein belongs to the glycosyltransferase 4 family. MraY subfamily. The cofactor is Mg(2+).

The protein resides in the cell membrane. It carries out the reaction UDP-N-acetyl-alpha-D-muramoyl-L-alanyl-gamma-D-glutamyl-meso-2,6-diaminopimeloyl-D-alanyl-D-alanine + di-trans,octa-cis-undecaprenyl phosphate = di-trans,octa-cis-undecaprenyl diphospho-N-acetyl-alpha-D-muramoyl-L-alanyl-D-glutamyl-meso-2,6-diaminopimeloyl-D-alanyl-D-alanine + UMP. It functions in the pathway cell wall biogenesis; peptidoglycan biosynthesis. In terms of biological role, catalyzes the initial step of the lipid cycle reactions in the biosynthesis of the cell wall peptidoglycan: transfers peptidoglycan precursor phospho-MurNAc-pentapeptide from UDP-MurNAc-pentapeptide onto the lipid carrier undecaprenyl phosphate, yielding undecaprenyl-pyrophosphoryl-MurNAc-pentapeptide, known as lipid I. This is Phospho-N-acetylmuramoyl-pentapeptide-transferase from Mycobacterium avium (strain 104).